We begin with the raw amino-acid sequence, 152 residues long: SsrA-binding protein (152 aa).

The span at 129–140 shows a compositional bias: basic and acidic residues; the sequence is KREDMKKKDSQR. The segment at 129–152 is disordered; the sequence is KREDMKKKDSQRELSQALKSKNRE. Over residues 141 to 152 the composition is skewed to polar residues; sequence ELSQALKSKNRE.

The protein belongs to the SmpB family.

The protein resides in the cytoplasm. Functionally, required for rescue of stalled ribosomes mediated by trans-translation. Binds to transfer-messenger RNA (tmRNA), required for stable association of tmRNA with ribosomes. tmRNA and SmpB together mimic tRNA shape, replacing the anticodon stem-loop with SmpB. tmRNA is encoded by the ssrA gene; the 2 termini fold to resemble tRNA(Ala) and it encodes a 'tag peptide', a short internal open reading frame. During trans-translation Ala-aminoacylated tmRNA acts like a tRNA, entering the A-site of stalled ribosomes, displacing the stalled mRNA. The ribosome then switches to translate the ORF on the tmRNA; the nascent peptide is terminated with the 'tag peptide' encoded by the tmRNA and targeted for degradation. The ribosome is freed to recommence translation, which seems to be the essential function of trans-translation. In Pelobacter propionicus (strain DSM 2379 / NBRC 103807 / OttBd1), this protein is SsrA-binding protein.